Here is a 388-residue protein sequence, read N- to C-terminus: Succinate--CoA ligase [ADP-forming] subunit beta (388 aa).

Residues 9 to 244 (KQLFARSGLP…QSQEDPREAQ (236 aa)) form the ATP-grasp domain. Residues Lys46, 53-55 (GRG), Glu99, Thr102, and Glu107 contribute to the ATP site. Mg(2+) contacts are provided by Asn199 and Asp213. Substrate contacts are provided by residues Asn264 and 321–323 (GIV).

It belongs to the succinate/malate CoA ligase beta subunit family. As to quaternary structure, heterotetramer of two alpha and two beta subunits. Mg(2+) is required as a cofactor.

It catalyses the reaction succinate + ATP + CoA = succinyl-CoA + ADP + phosphate. The enzyme catalyses GTP + succinate + CoA = succinyl-CoA + GDP + phosphate. The protein operates within carbohydrate metabolism; tricarboxylic acid cycle; succinate from succinyl-CoA (ligase route): step 1/1. Succinyl-CoA synthetase functions in the citric acid cycle (TCA), coupling the hydrolysis of succinyl-CoA to the synthesis of either ATP or GTP and thus represents the only step of substrate-level phosphorylation in the TCA. The beta subunit provides nucleotide specificity of the enzyme and binds the substrate succinate, while the binding sites for coenzyme A and phosphate are found in the alpha subunit. This is Succinate--CoA ligase [ADP-forming] subunit beta from Cronobacter sakazakii (strain ATCC BAA-894) (Enterobacter sakazakii).